The sequence spans 473 residues: Photosystem II CP43 reaction center protein (473 aa).

Positions 1–14 (MKTLYSLRRFYHVE) are excised as a propeptide. Residue threonine 15 is modified to N-acetylthreonine. The residue at position 15 (threonine 15) is a Phosphothreonine. The next 5 helical transmembrane spans lie at 69 to 93 (LFEV…PHLA), 134 to 155 (LIGP…KDKN), 178 to 200 (KACY…RIIT), 255 to 275 (KPWA…LSYS), and 291 to 312 (WFNN…ASQA). Residue glutamate 367 participates in [CaMn4O5] cluster binding. The helical transmembrane segment at 447-471 (RARAAAAGFEKGIERETEPVLFMKP) threads the bilayer.

It belongs to the PsbB/PsbC family. PsbC subfamily. In terms of assembly, PSII is composed of 1 copy each of membrane proteins PsbA, PsbB, PsbC, PsbD, PsbE, PsbF, PsbH, PsbI, PsbJ, PsbK, PsbL, PsbM, PsbT, PsbX, PsbY, PsbZ, Psb30/Ycf12, at least 3 peripheral proteins of the oxygen-evolving complex and a large number of cofactors. It forms dimeric complexes. It depends on Binds multiple chlorophylls and provides some of the ligands for the Ca-4Mn-5O cluster of the oxygen-evolving complex. It may also provide a ligand for a Cl- that is required for oxygen evolution. PSII binds additional chlorophylls, carotenoids and specific lipids. as a cofactor.

The protein localises to the plastid. The protein resides in the chloroplast thylakoid membrane. Functionally, one of the components of the core complex of photosystem II (PSII). It binds chlorophyll and helps catalyze the primary light-induced photochemical processes of PSII. PSII is a light-driven water:plastoquinone oxidoreductase, using light energy to abstract electrons from H(2)O, generating O(2) and a proton gradient subsequently used for ATP formation. The sequence is that of Photosystem II CP43 reaction center protein from Mesostigma viride (Green alga).